The chain runs to 259 residues: UPF0246 protein ABBFA_001173 (259 aa).

Belongs to the UPF0246 family.

The sequence is that of UPF0246 protein ABBFA_001173 from Acinetobacter baumannii (strain AB307-0294).